Consider the following 510-residue polypeptide: ATP synthase subunit alpha (510 aa).

Residue 169-176 (GDRQTGKT) participates in ATP binding.

The protein belongs to the ATPase alpha/beta chains family. F-type ATPases have 2 components, CF(1) - the catalytic core - and CF(0) - the membrane proton channel. CF(1) has five subunits: alpha(3), beta(3), gamma(1), delta(1), epsilon(1). CF(0) has three main subunits: a(1), b(2) and c(9-12). The alpha and beta chains form an alternating ring which encloses part of the gamma chain. CF(1) is attached to CF(0) by a central stalk formed by the gamma and epsilon chains, while a peripheral stalk is formed by the delta and b chains.

It is found in the cell inner membrane. The catalysed reaction is ATP + H2O + 4 H(+)(in) = ADP + phosphate + 5 H(+)(out). Functionally, produces ATP from ADP in the presence of a proton gradient across the membrane. The alpha chain is a regulatory subunit. This chain is ATP synthase subunit alpha, found in Rickettsia conorii (strain ATCC VR-613 / Malish 7).